A 406-amino-acid polypeptide reads, in one-letter code: Phosphatidylinositol 5-phosphate 4-kinase type-2 alpha (406 aa).

Position 2 is an N-acetylalanine (A2). T3 is modified (phosphothreonine). At S14 the chain carries Phosphoserine. The region spanning 33–405 (ASDPLLSVLM…RFLDFIGHIL (373 aa)) is the PIPK domain. The tract at residues 59 to 65 (VMLMPDD) is required for interaction with PIP5K1A. An N6-acetyllysine mark is found at K89 and K145. The tract at residues 287–328 (EQEEVECEENEGEEEGESDGAHPIGTPPDSPGNTLNSSPPLA) is disordered. The segment covering 289 to 304 (EEVECEENEGEEEGES) has biased composition (acidic residues).

As to quaternary structure, homodimer. Interacts with PIP4K2B; the interaction may regulate localization to the nucleus. Probably interacts with PIP5K1A; the interaction inhibits PIP5K1A kinase activity. Post-translationally, phosphorylated in tyrosines. Phosphorylation is induced by light and increases kinase activity.

It is found in the cell membrane. It localises to the nucleus. The protein localises to the lysosome. The protein resides in the cytoplasm. Its subcellular location is the photoreceptor inner segment. It is found in the cell projection. It localises to the cilium. The protein localises to the photoreceptor outer segment. The catalysed reaction is a 1,2-diacyl-sn-glycero-3-phospho-(1D-myo-inositol-5-phosphate) + ATP = a 1,2-diacyl-sn-glycero-3-phospho-(1D-myo-inositol-4,5-bisphosphate) + ADP + H(+). It carries out the reaction 1,2-dihexadecanoyl-sn-glycero-3-phospho-(1D-myo-inositol-5-phosphate) + ATP = 1,2-dihexadecanoyl-sn-glycero-3-phospho-(1D-myo-inositol-4,5-bisphosphate) + ADP + H(+). The enzyme catalyses 1,2-dihexadecanoyl-sn-glycero-3-phospho-(1D-myo-inositol-5-phosphate) + GTP = 1,2-dihexadecanoyl-sn-glycero-3-phospho-(1D-myo-inositol-4,5-bisphosphate) + GDP + H(+). Its activity is regulated as follows. In rod outer segments, activated by light. Functionally, catalyzes the phosphorylation of phosphatidylinositol 5-phosphate (PtdIns5P) on the fourth hydroxyl of the myo-inositol ring, to form phosphatidylinositol 4,5-bisphosphate (PtdIns(4,5)P2). Has both ATP- and GTP-dependent kinase activities. May exert its function by regulating the levels of PtdIns5P, which functions in the cytosol by increasing AKT activity and in the nucleus signals through ING2. May regulate the pool of cytosolic PtdIns5P in response to the activation of tyrosine phosphorylation. Required for lysosome-peroxisome membrane contacts and intracellular cholesterol transport through modulating peroxisomal PtdIns(4,5)P2 level. In collaboration with PIP4K2B, has a role in mediating autophagy in times of nutrient stress. Required for autophagosome-lysosome fusion and the regulation of cellular lipid metabolism. Negatively regulates insulin signaling through a catalytic-independent mechanism. PIP4Ks interact with PIP5Ks and suppress PIP5K-mediated PtdIns(4,5)P2 synthesis and insulin-dependent conversion to PtdIns(3,4,5)P3. May be involved in thrombopoiesis, and the terminal maturation of megakaryocytes and regulation of their size. The chain is Phosphatidylinositol 5-phosphate 4-kinase type-2 alpha from Rattus norvegicus (Rat).